The primary structure comprises 238 residues: Ribonuclease PH (238 aa).

Phosphate-binding positions include R86 and 124–126; that span reads GTR.

It belongs to the RNase PH family. In terms of assembly, homohexameric ring arranged as a trimer of dimers.

The enzyme catalyses tRNA(n+1) + phosphate = tRNA(n) + a ribonucleoside 5'-diphosphate. Its function is as follows. Phosphorolytic 3'-5' exoribonuclease that plays an important role in tRNA 3'-end maturation. Removes nucleotide residues following the 3'-CCA terminus of tRNAs; can also add nucleotides to the ends of RNA molecules by using nucleoside diphosphates as substrates, but this may not be physiologically important. Probably plays a role in initiation of 16S rRNA degradation (leading to ribosome degradation) during starvation. This Psychrobacter sp. (strain PRwf-1) protein is Ribonuclease PH.